A 407-amino-acid polypeptide reads, in one-letter code: Digeranylgeranylglycerophospholipid reductase (407 aa).

The FAD site is built by alanine 15, glutamate 34, cysteine 45, alanine 46, glycine 48, arginine 99, alanine 123, aspartate 281, glycine 293, and isoleucine 294.

The protein belongs to the geranylgeranyl reductase family. DGGGPL reductase subfamily. FAD is required as a cofactor.

The enzyme catalyses a 2,3-bis-O-phytanyl-sn-glycerol 1-phospholipid + 8 oxidized 2[4Fe-4S]-[ferredoxin] = a 2,3-bis-O-(geranylgeranyl)-sn-glycerol 1-phospholipid + 8 reduced 2[4Fe-4S]-[ferredoxin] + 16 H(+). The catalysed reaction is 2,3-bis-O-(phytanyl)-sn-glycerol 1-phosphate + 8 oxidized 2[4Fe-4S]-[ferredoxin] = 2,3-bis-O-(geranylgeranyl)-sn-glycerol 1-phosphate + 8 reduced 2[4Fe-4S]-[ferredoxin] + 16 H(+). It carries out the reaction a 2,3-bis-O-phytanyl-sn-glycerol 1-phospholipid + 8 A = a 2,3-bis-O-(geranylgeranyl)-sn-glycerol 1-phospholipid + 8 AH2. It catalyses the reaction CDP-2,3-bis-O-(geranylgeranyl)-sn-glycerol + 8 AH2 = CDP-2,3-bis-O-(phytanyl)-sn-glycerol + 8 A. The enzyme catalyses archaetidylserine + 8 AH2 = 2,3-bis-O-phytanyl-sn-glycero-3-phospho-L-serine + 8 A. It participates in membrane lipid metabolism; glycerophospholipid metabolism. Its function is as follows. Is involved in the reduction of 2,3-digeranylgeranylglycerophospholipids (unsaturated archaeols) into 2,3-diphytanylglycerophospholipids (saturated archaeols) in the biosynthesis of archaeal membrane lipids. Catalyzes the formation of archaetidic acid (2,3-di-O-phytanyl-sn-glyceryl phosphate) from 2,3-di-O-geranylgeranylglyceryl phosphate (DGGGP) via the hydrogenation of each double bond of the isoprenoid chains. Requires the adjacently encoded ferredoxin MA_1485 as the electron donor. Is also probably able to reduce double bonds of geranyl groups in CDP-2,3-bis-O-(geranylgeranyl)-sn-glycerol and archaetidylserine, thus acting at various stages in the biosynthesis of archaeal membrane lipids. This Methanosarcina acetivorans (strain ATCC 35395 / DSM 2834 / JCM 12185 / C2A) protein is Digeranylgeranylglycerophospholipid reductase.